Reading from the N-terminus, the 216-residue chain is LexA repressor (216 aa).

The segment at residues 28–48 (RAEIAAELGFSSANSAEEHLR) is a DNA-binding region (H-T-H motif). Active-site for autocatalytic cleavage activity residues include S134 and K171.

It belongs to the peptidase S24 family. As to quaternary structure, homodimer.

The catalysed reaction is Hydrolysis of Ala-|-Gly bond in repressor LexA.. Represses a number of genes involved in the response to DNA damage (SOS response), including recA and lexA. In the presence of single-stranded DNA, RecA interacts with LexA causing an autocatalytic cleavage which disrupts the DNA-binding part of LexA, leading to derepression of the SOS regulon and eventually DNA repair. This Paraburkholderia phytofirmans (strain DSM 17436 / LMG 22146 / PsJN) (Burkholderia phytofirmans) protein is LexA repressor.